A 203-amino-acid chain; its full sequence is Thymidylate kinase (203 aa).

Residue 14 to 21 (GGEGIGKS) coordinates ATP.

The protein belongs to the thymidylate kinase family.

It catalyses the reaction dTMP + ATP = dTDP + ADP. In terms of biological role, phosphorylation of dTMP to form dTDP in both de novo and salvage pathways of dTTP synthesis. This Rickettsia africae (strain ESF-5) protein is Thymidylate kinase.